We begin with the raw amino-acid sequence, 471 residues long: Desmin (471 aa).

A head region spans residues 2 to 109 (SQAYSSSQRV…QEFLTTRTNE (108 aa)). Ser-7 is modified (phosphoserine; by CDK1). Ser-12 is subject to Phosphoserine; by AURKB. Arg-16 is modified (omega-N-methylarginine). Phosphothreonine; by AURKB and ROCK1 is present on Thr-17. Residue Ser-28 is modified to Phosphoserine; by CDK1. Position 31 is a phosphoserine (Ser-31). A Phosphoserine; by CDK1 modification is found at Ser-32. Residue Arg-37 is modified to Asymmetric dimethylarginine; alternate. Residue Arg-37 is modified to Omega-N-methylarginine; alternate. Ser-45 carries the post-translational modification Phosphoserine. Residue Arg-58 is modified to ADP-ribosylarginine. The residue at position 60 (Ser-60) is a Phosphoserine; by AURKB. Position 70 is an omega-N-methylarginine (Arg-70). Thr-77 bears the Phosphothreonine; by ROCK1 mark. Residue Ser-81 is modified to Phosphoserine. Residues 109–417 (EKVELQELND…KLLEGEESRI (309 aa)) enclose the IF rod domain. The interval 110–142 (KVELQELNDRFANYIEKVRFLEQQNAALAAEVN) is coil 1A. Positions 143–152 (RLKGREPTRV) are linker 1. Residues 153-253 (AEIYEEELRE…HEEEIRELQA (101 aa)) form a coil 1B region. The segment at 254–269 (QLQEQQVQVEMDMSKP) is linker 12. Positions 269–416 (PDLTAALRDI…RKLLEGEESR (148 aa)) are interaction with NEB. A coil 2A region spans residues 270–288 (DLTAALRDIRAQYETIAAK). The linker 2 stretch occupies residues 289–296 (NISEAEEW). A phosphoserine mark is found at Ser-291, Ser-359, Ser-362, and Ser-425. The segment at 297–413 (YKSKVSDLTQ…ATYRKLLEGE (117 aa)) is coil 2B. The segment at 414–471 (ESRINLPIQTFSALNFRETSPEQRGSEVHTKKTVMIKTIETRDGEVVSEATQQQHEVL) is tail. Residues 439 to 454 (SEVHTKKTVMIKTIET) form an interaction with CRYAB region.

The protein belongs to the intermediate filament family. As to quaternary structure, homomer. Interacts with DST. Interacts with MTM1. Interacts with EPPK1; interaction is dependent of higher-order structure of intermediate filament. Interacts with CRYAB. Interacts with NEB (via nebulin repeats 160-164). Interacts (via rod region) with NEBL (via nebulin repeats 1-5). Interacts with ASB2; the interaction targets DES for proteasomal degradation. Interacts with PKP1. Interacts with FLII. ADP-ribosylation prevents ability to form intermediate filaments. In terms of processing, phosphorylation at Ser-7, Ser-28 and Ser-32 by CDK1 and phosphorylation at Ser-60 by AURKB contribute to efficient separation of desmin intermediate filaments during mitosis. Post-translationally, ubiquitination by a SCF-like complex containing ASB2 leads to proteasomal degradation.

It localises to the cytoplasm. Its subcellular location is the myofibril. It is found in the sarcomere. The protein resides in the z line. The protein localises to the cell membrane. It localises to the sarcolemma. Its subcellular location is the nucleus. It is found in the cell tip. The protein resides in the nucleus envelope. Its function is as follows. Muscle-specific type III intermediate filament essential for proper muscular structure and function. Plays a crucial role in maintaining the structure of sarcomeres, inter-connecting the Z-disks and forming the myofibrils, linking them not only to the sarcolemmal cytoskeleton, but also to the nucleus and mitochondria, thus providing strength for the muscle fiber during activity. In adult striated muscle they form a fibrous network connecting myofibrils to each other and to the plasma membrane from the periphery of the Z-line structures. May act as a sarcomeric microtubule-anchoring protein: specifically associates with detyrosinated tubulin-alpha chains, leading to buckled microtubules and mechanical resistance to contraction. Required for nuclear membrane integrity, via anchoring at the cell tip and nuclear envelope, resulting in maintenance of microtubule-derived intracellular mechanical forces. Contributes to the transcriptional regulation of the NKX2-5 gene in cardiac progenitor cells during a short period of cardiomyogenesis and in cardiac side population stem cells in the adult. Plays a role in maintaining an optimal conformation of nebulette (NEB) on heart muscle sarcomeres to bind and recruit cardiac alpha-actin. The polypeptide is Desmin (DES) (Sus scrofa (Pig)).